A 390-amino-acid polypeptide reads, in one-letter code: Mannitol-1-phosphate 5-dehydrogenase (390 aa).

7-18 is an NAD(+) binding site; it reads AVHFGGGNIGRG. Lys-216 is an active-site residue.

Belongs to the mannitol dehydrogenase family. As to quaternary structure, monomer.

It catalyses the reaction D-mannitol 1-phosphate + NAD(+) = beta-D-fructose 6-phosphate + NADH + H(+). Functionally, catalyzes the NAD(H)-dependent interconversion of D-fructose 6-phosphate and D-mannitol 1-phosphate in the mannitol metabolic pathway. Required for the process of sporulation on senescing leaf material. The protein is Mannitol-1-phosphate 5-dehydrogenase (mpd1) of Phaeosphaeria nodorum (strain SN15 / ATCC MYA-4574 / FGSC 10173) (Glume blotch fungus).